The following is a 602-amino-acid chain: Aspartate--tRNA(Asp/Asn) ligase (602 aa).

Glutamate 175 is an L-aspartate binding site. An aspartate region spans residues 199 to 202 (QIFK). Position 221 (arginine 221) interacts with L-aspartate. Residues 221–223 (RDE) and glutamine 230 each bind ATP. Histidine 458 lines the L-aspartate pocket. Glutamate 492 provides a ligand contact to ATP. Residue arginine 499 coordinates L-aspartate. 544–547 (GLDR) is an ATP binding site.

Belongs to the class-II aminoacyl-tRNA synthetase family. Type 1 subfamily. In terms of assembly, homodimer.

The protein localises to the cytoplasm. The enzyme catalyses tRNA(Asx) + L-aspartate + ATP = L-aspartyl-tRNA(Asx) + AMP + diphosphate. Its function is as follows. Aspartyl-tRNA synthetase with relaxed tRNA specificity since it is able to aspartylate not only its cognate tRNA(Asp) but also tRNA(Asn). Reaction proceeds in two steps: L-aspartate is first activated by ATP to form Asp-AMP and then transferred to the acceptor end of tRNA(Asp/Asn). The protein is Aspartate--tRNA(Asp/Asn) ligase of Cupriavidus necator (strain ATCC 17699 / DSM 428 / KCTC 22496 / NCIMB 10442 / H16 / Stanier 337) (Ralstonia eutropha).